Reading from the N-terminus, the 945-residue chain is Splicing factor, suppressor of white-apricot homolog (945 aa).

Disordered stretches follow at residues 1-28 and 157-190; these read MYGA…GTGT and YYDP…PFIA. Composition is skewed to basic and acidic residues over residues 9 to 21 and 169 to 178; these read AKAE…KEEA and PSKQREKSEA. Residues 211-253 form an SURP motif 1 repeat; the sequence is IIERTANFVCKQGAQFEIMLKAKQARNSQFDFLRFDHYLNPYY. The disordered stretch occupies residues 269–298; that stretch reads AESKSEEKKKSGPTSDNEEEDDEEDGSYLH. A Phosphoserine modification is found at Ser283. Positions 284–294 are enriched in acidic residues; the sequence is DNEEEDDEEDG. Lys315 is subject to N6-acetyllysine. 2 disordered regions span residues 332-355 and 403-438; these read KAQA…PSQV and SSSP…STTT. Positions 335–352 are enriched in low complexity; that stretch reads ADSSAPAPPTADGTPAQP. The segment covering 412–425 has biased composition (pro residues); that stretch reads VPPPPGTTPPPPPT. Positions 426-438 are enriched in low complexity; sequence TAESSSGVTSTTT. Residues 458–498 form an SURP motif 2 repeat; it reads VIDKLAEYVARNGLKFETSVRAKNDQRFEFLQPWHQYNAYY. Disordered stretches follow at residues 512-566, 589-680, and 714-921; these read GSTQ…TVDG, PLEK…QAER, and GVMP…VQSK. A compositionally biased stretch (low complexity) spans 514–527; the sequence is TQAASTAEEAPTET. A compositionally biased stretch (acidic residues) spans 528-540; it reads AVEESSEAGEDGA. The span at 589–598 shows a compositional bias: basic and acidic residues; that stretch reads PLEKNRVKLD. A phosphoserine mark is found at Ser601 and Ser621. Positions 615 to 630 are enriched in low complexity; that stretch reads SSVANPSPAAAPPSAV. Residues 632–686 are a coiled coil; it reads EEKKPQLTQEELEAKQAKQKLEDRLAAAAREKLAQASKESKEKQLQAERKRKAAL. Position 639 is a phosphothreonine (Thr639). 2 stretches are compositionally biased toward basic and acidic residues: residues 643–679 and 733–752; these read LEAK…LQAE and KPPE…EERE. Basic residues-rich tracts occupy residues 753–787 and 795–810; these read KKKK…KAKH and TVRR…RRRA. A compositionally biased stretch (basic and acidic residues) spans 811 to 821; that stretch reads HSPERRREDRS. Phosphoserine is present on residues Ser829 and Ser831. A compositionally biased stretch (basic residues) spans 835–861; the sequence is SRKRTRSRSPHEKKKKRRSRSRTKAKA. Low complexity predominate over residues 871–894; the sequence is QAAQRPSAHSAHSASISPVESRGS. Positions 895–908 are enriched in basic and acidic residues; sequence SQERSRGVSQEKDG. 2 positions are modified to phosphoserine: Ser899 and Ser903. Over residues 909–920 the composition is skewed to low complexity; sequence QISSAIVSSVQS.

It is found in the nucleus. Functionally, plays a role as an alternative splicing regulator. Regulate its own expression at the level of RNA processing. Also regulates the splicing of fibronectin and CD45 genes. May act, at least in part, by interaction with other R/S-containing splicing factors. Represses the splicing of MAPT/Tau exon 10. The sequence is that of Splicing factor, suppressor of white-apricot homolog (Sfswap) from Rattus norvegicus (Rat).